The following is a 160-amino-acid chain: Large ribosomal subunit protein bL19 (160 aa).

2 stretches are compositionally biased toward basic and acidic residues: residues 1-15 and 28-39; these read MTEDLKNTSPSKEES and ATRETKPKDSPS. Residues 1–44 form a disordered region; the sequence is MTEDLKNTSPSKEESNEIEESSKATPKATRETKPKDSPSKTKLS.

This sequence belongs to the bacterial ribosomal protein bL19 family.

This protein is located at the 30S-50S ribosomal subunit interface and may play a role in the structure and function of the aminoacyl-tRNA binding site. This Prochlorococcus marinus (strain SARG / CCMP1375 / SS120) protein is Large ribosomal subunit protein bL19.